The primary structure comprises 257 residues: 3-methyl-2-oxobutanoate hydroxymethyltransferase (257 aa).

Asp42 and Asp86 together coordinate Mg(2+). 3-methyl-2-oxobutanoate contacts are provided by residues 42–43 (DS), Asp86, and Lys116. Glu118 provides a ligand contact to Mg(2+). Glu185 functions as the Proton acceptor in the catalytic mechanism.

The protein belongs to the PanB family. Homodecamer; pentamer of dimers. Mg(2+) is required as a cofactor.

It localises to the cytoplasm. The catalysed reaction is 3-methyl-2-oxobutanoate + (6R)-5,10-methylene-5,6,7,8-tetrahydrofolate + H2O = 2-dehydropantoate + (6S)-5,6,7,8-tetrahydrofolate. It participates in cofactor biosynthesis; (R)-pantothenate biosynthesis; (R)-pantoate from 3-methyl-2-oxobutanoate: step 1/2. Functionally, catalyzes the reversible reaction in which hydroxymethyl group from 5,10-methylenetetrahydrofolate is transferred onto alpha-ketoisovalerate to form ketopantoate. This chain is 3-methyl-2-oxobutanoate hydroxymethyltransferase, found in Prochlorococcus marinus (strain MIT 9312).